A 743-amino-acid polypeptide reads, in one-letter code: 1,4-alpha-glucan branching enzyme GlgB (743 aa).

The active-site Nucleophile is the Asp416. Residue Glu469 is the Proton donor of the active site.

It belongs to the glycosyl hydrolase 13 family. GlgB subfamily. As to quaternary structure, monomer.

The enzyme catalyses Transfers a segment of a (1-&gt;4)-alpha-D-glucan chain to a primary hydroxy group in a similar glucan chain.. Its pathway is glycan biosynthesis; glycogen biosynthesis. Functionally, catalyzes the formation of the alpha-1,6-glucosidic linkages in glycogen by scission of a 1,4-alpha-linked oligosaccharide from growing alpha-1,4-glucan chains and the subsequent attachment of the oligosaccharide to the alpha-1,6 position. The protein is 1,4-alpha-glucan branching enzyme GlgB of Shewanella baltica (strain OS223).